The chain runs to 182 residues: Pyruvoyl-dependent arginine decarboxylase (182 aa).

Ser-44 is modified (pyruvic acid (Ser)).

This sequence belongs to the PdaD family. Pyruvate is required as a cofactor.

The catalysed reaction is L-arginine + H(+) = agmatine + CO2. In Picrophilus torridus (strain ATCC 700027 / DSM 9790 / JCM 10055 / NBRC 100828 / KAW 2/3), this protein is Pyruvoyl-dependent arginine decarboxylase.